The sequence spans 212 residues: Membrane-bound lytic murein transglycosylase E (212 aa).

Belongs to the transglycosylase Slt family.

The enzyme catalyses Exolytic cleavage of the (1-&gt;4)-beta-glycosidic linkage between N-acetylmuramic acid (MurNAc) and N-acetylglucosamine (GlcNAc) residues in peptidoglycan, from either the reducing or the non-reducing ends of the peptidoglycan chains, with concomitant formation of a 1,6-anhydrobond in the MurNAc residue.. Functionally, murein-degrading enzyme. May play a role in recycling of muropeptides during cell elongation and/or cell division. This chain is Membrane-bound lytic murein transglycosylase E (mltE), found in Buchnera aphidicola subsp. Baizongia pistaciae (strain Bp).